A 344-amino-acid chain; its full sequence is Heme A synthase (344 aa).

The next 9 helical transmembrane spans lie at 20–40 (IAWWLIGVAALVFIMVVVGGL), 104–124 (RFLGRLIGLAFFVPFVFFVVT), 135–155 (LIFLFVLGGMQGVLGWWMVMS), 170–190 (AHLGLATLIFGALIWTALDLL), 205–225 (AAAILALIFLQTILGAFVAGI), 233–253 (TWPLMAGAFIPDGLFAMTPVW), 265–285 (FQHRMTAYLLLLCVVWHWWAA), 296–316 (WLAVATFAQACIGIWTVLWVV), and 317–337 (PIPLGAAHQAGAMVVFGVAVW). Histidine 267 lines the heme pocket. Histidine 324 contributes to the heme binding site.

This sequence belongs to the COX15/CtaA family. Type 2 subfamily. In terms of assembly, interacts with CtaB. Requires heme b as cofactor.

The protein localises to the cell membrane. The catalysed reaction is Fe(II)-heme o + 2 A + H2O = Fe(II)-heme a + 2 AH2. The protein operates within porphyrin-containing compound metabolism; heme A biosynthesis; heme A from heme O: step 1/1. Catalyzes the conversion of heme O to heme A by two successive hydroxylations of the methyl group at C8. The first hydroxylation forms heme I, the second hydroxylation results in an unstable dihydroxymethyl group, which spontaneously dehydrates, resulting in the formyl group of heme A. The sequence is that of Heme A synthase from Parvibaculum lavamentivorans (strain DS-1 / DSM 13023 / NCIMB 13966).